Consider the following 362-residue polypeptide: Chorismate synthase (362 aa).

NADP(+)-binding residues include R48 and R54. FMN is bound by residues 125–127 (RSS), 241–242 (NA), G286, 301–305 (KPTSS), and R327.

The protein belongs to the chorismate synthase family. In terms of assembly, homotetramer. The cofactor is FMNH2.

The enzyme catalyses 5-O-(1-carboxyvinyl)-3-phosphoshikimate = chorismate + phosphate. It participates in metabolic intermediate biosynthesis; chorismate biosynthesis; chorismate from D-erythrose 4-phosphate and phosphoenolpyruvate: step 7/7. Catalyzes the anti-1,4-elimination of the C-3 phosphate and the C-6 proR hydrogen from 5-enolpyruvylshikimate-3-phosphate (EPSP) to yield chorismate, which is the branch point compound that serves as the starting substrate for the three terminal pathways of aromatic amino acid biosynthesis. This reaction introduces a second double bond into the aromatic ring system. The sequence is that of Chorismate synthase from Paramagnetospirillum magneticum (strain ATCC 700264 / AMB-1) (Magnetospirillum magneticum).